An 80-amino-acid polypeptide reads, in one-letter code: Probable antimicrobial peptide clone Con10 (80 aa).

The first 24 residues, 1–24, serve as a signal peptide directing secretion; it reads MQYKTKTFLVIFLAYLVVTNEAEA. The propeptide occupies 56–80; the sequence is EIEDFFDPYQRELDLELERLLSQLQ.

This sequence belongs to the non-disulfide-bridged peptide (NDBP) superfamily. Medium-length antimicrobial peptide (group 3) family. Expressed by the venom gland.

Its subcellular location is the secreted. The protein localises to the target cell membrane. In terms of biological role, antimicrobial peptide. Has antifungal activity against all strains tested (MIC=12.5-200 uM). May act by disrupting the integrity of the bacterial cell membrane. The polypeptide is Probable antimicrobial peptide clone Con10 (Opisthacanthus cayaporum (South American scorpion)).